Here is an 839-residue protein sequence, read N- to C-terminus: Thymine dioxygenase JBP1 (839 aa).

The thymine dioxygenase stretch occupies residues lysine 86–alanine 288. Positions 213, 215, and 263 each coordinate Fe cation. A 2-oxoglutarate-binding site is contributed by arginine 279. The segment at lysine 415–proline 583 is DNA-binding JBP1 domain.

Belongs to the TET family. JBP1 subfamily. Monomer. Binds to DNA as a monomer. The cofactor is Fe(2+).

It is found in the nucleus. The catalysed reaction is thymine + 2-oxoglutarate + O2 = 5-hydroxymethyluracil + succinate + CO2. In terms of biological role, dioxygenase that catalyzes the first step of DNA base J (beta-d-glucosyl-HOMedU) biosynthesis by converting thymine to 5-hydroxymethyluracil (HOMedU). DNA base J is a hypermodified thymidine residue found in the genome of kinetoplastid parasites, which is localized primarily to repetitive DNA, namely the telomeres, and is implicated in the regulation of antigenic variation. Also specifically binds to base J-containing DNA (J-DNA). Involved in propagation and maintenance of DNA base J synthesis initiated by JBP2 by specifically binding already synthesized DNA base J and propagating J synthesis. Thymine dioxygenase activity and J-DNA-binding are independent functions. The polypeptide is Thymine dioxygenase JBP1 (JBP1) (Trypanosoma brucei brucei).